Here is a 539-residue protein sequence, read N- to C-terminus: Phenylacetyl-CoA ligase epaB (539 aa).

AMP is bound at residue 188-199; it reads RLFSSGTTGLPK. An AMP-binding region spans residues 449–525; that stretch reads EVEGVLRNHP…DAIPRNASGK (77 aa).

The protein belongs to the ATP-dependent AMP-binding enzyme family.

It functions in the pathway secondary metabolite biosynthesis. Phenylacetyl-CoA ligase; part of the gene cluster that mediates the biosynthesis of nigerpyrone and its derivatives carbonarone A and pestalamide A. The biosynthesis pathway begins with the polyketide assembly by epaA to form phenylacetyl triketide precursor from successive condensation of two malonyl-CoA, presumably with one phenylacetyl-CoA starter unit produced by the phenylacetyl-CoA ligase epaB. For the nigerpyrone biosynthesis, the reactive polyketide chain is released as an aldehyde through the R-domain. A nonenzymatic cyclization and dehydration may create nigerpyrone. For the biosynthesis of carbonarone A and pestalamide A, an extra methyl group is added through the C-methyltransferase domain. Several further steps involving the dehydrogenase orf1, the cytochrome P450 monooxygenase orf2 and the FAD-dependent monooxygenase orf3 are required to form a carbonarone A precursor which is converted to carbonarone A via cyclization. The O-acetyltransferase epaC could catalyze the transfer of 2-methylsuccinyl-CoA, a common intermediate in the ethylmalonyl-CoA pathway, to generate the final product pestalamide A. The protein is Phenylacetyl-CoA ligase epaB of Aspergillus niger (strain ATCC MYA-4892 / CBS 513.88 / FGSC A1513).